Here is a 183-residue protein sequence, read N- to C-terminus: MVMNTDSLALIKNSIKTIPDYPKEGILFRDVTSLLEDPQAYKLTIGLLVEHYKEQGFTKVVGTEARGFLFGAPLALELGIGFVPVRKPGKLPRETISESYELEYGHDVLEIHVDAITKEDKVLVVDDLLATGGTIEATVKLIRNLGGQVNHAAFVISLPDLGGEKRLETMDLELLSLCEFEGE.

This sequence belongs to the purine/pyrimidine phosphoribosyltransferase family. As to quaternary structure, homodimer.

The protein localises to the cytoplasm. The enzyme catalyses AMP + diphosphate = 5-phospho-alpha-D-ribose 1-diphosphate + adenine. Its pathway is purine metabolism; AMP biosynthesis via salvage pathway; AMP from adenine: step 1/1. Functionally, catalyzes a salvage reaction resulting in the formation of AMP, that is energically less costly than de novo synthesis. The polypeptide is Adenine phosphoribosyltransferase (Shewanella piezotolerans (strain WP3 / JCM 13877)).